The primary structure comprises 1244 residues: Structural polyprotein (1244 aa).

A disordered region spans residues 1 to 113 (MNSVFYNPFG…GKRQRTALKF (113 aa)). Over residues 35 to 44 (GLTTQIQQLT) the composition is skewed to polar residues. A host transcription inhibition region spans residues 35–69 (GLTTQIQQLTRAVRALVLDNATRRQRPAPRTRPRK). Basic residues predominate over residues 57-81 (RRQRPAPRTRPRKPKTQKPKPKKQN). The Nuclear localization signal signature appears at 62–103 (APRTRPRKPKTQKPKPKKQNQKPPQQQKKGKNQPQQPKKPKP). A compositionally biased stretch (low complexity) spans 82–97 (QKPPQQQKKGKNQPQQ). Residues 85-118 (PQQQKKGKNQPQQPKKPKPGKRQRTALKFEADRT) form a binding to the viral RNA region. A compositionally biased stretch (basic residues) spans 99–109 (KKPKPGKRQRT). Positions 103-117 (PGKRQRTALKFEADR) are ribosome-binding. Residues 117 to 267 (RTFVGKNEDG…KTTHEDTVEW (151 aa)) form the Peptidase S3 domain. Residue histidine 144 is the Charge relay system of the active site. Positions 149 to 159 (IDHPALAKLKF) match the Nuclear export signal motif. The interaction with spike glycoprotein E2 stretch occupies residues 160–165 (TKSSSY). Residue aspartate 166 is the Charge relay system of the active site. A dimerization of the capsid protein region spans residues 188–198 (PEVFYNWHHGA). Serine 218 acts as the Charge relay system in catalysis. A dimerization of the capsid protein region spans residues 224–228 (DNSGK). Positions 252–256 (KKGAA) are interaction with spike glycoprotein E2. Positions 268 to 280 (SRAITAMCILQNV) are functions as an uncleaved signal peptide for the precursor of protein E3/E2. Over 268-696 (SRAITAMCIL…HYYHLYPFYT (429 aa)) the chain is Extracellular. N-linked (GlcNAc...) asparagine; by host glycosylation occurs at asparagine 279. Disulfide bonds link cysteine 284–cysteine 290, cysteine 481–cysteine 595, cysteine 530–cysteine 555, and cysteine 532–cysteine 549. Asparagine 525 carries N-linked (GlcNAc...) asparagine; by host glycosylation. Residue asparagine 647 is glycosylated (N-linked (GlcNAc...) asparagine; by host). The chain crosses the membrane as a helical span at residues 697–717 (VTVLSGMGLAICAGLVISILC). The Cytoplasmic portion of the chain corresponds to 718 to 751 (CCKARRDCLTPYQLAPNATVPFLVTLCCCFQRTS). The segment at 720 to 724 (KARRD) is interaction with the capsid protein. S-palmitoyl cysteine; by host attachment occurs at residues cysteine 725, cysteine 745, and cysteine 746. Cysteine 725 and cysteine 746 form a disulfide bridge. Topologically, residues 752 to 764 (ADEFTDTMGYLWQ) are extracellular. The next 2 helical transmembrane spans lie at 765–785 (HSQTMFWIQLVIPLAAVITLV) and 786–805 (RCCSCCLPFLLVASPPNKAD). The Extracellular segment spans residues 806 to 1218 (AYEHTITVPN…KTSWNWITAL (413 aa)). 4 cysteine pairs are disulfide-bonded: cysteine 855–cysteine 920, cysteine 868–cysteine 900, cysteine 869–cysteine 902, and cysteine 874–cysteine 884. The E1 fusion peptide loop stretch occupies residues 890–907 (VYPFLWGGAQCFCDSENS). 2 N-linked (GlcNAc...) asparagine; by host glycosylation sites follow: asparagine 945 and asparagine 1051. 4 disulfide bridges follow: cysteine 1065–cysteine 1077, cysteine 1106–cysteine 1181, cysteine 1111–cysteine 1185, and cysteine 1133–cysteine 1175. Residues 1219 to 1239 (MGGISSIAAIAAIVLVIALVF) traverse the membrane as a helical segment. Residues 1240–1244 (TAQHR) are Cytoplasmic-facing.

In terms of assembly, homodimer. Homomultimer. Interacts with host karyopherin KPNA4; this interaction allows the nuclear import of the viral capsid protein. Interacts with spike glycoprotein E2. Interacts with host IRAK1; the interaction leads to inhibition of IRAK1-dependent signaling. The precursor of protein E3/E2 and E1 form a heterodimer shortly after synthesis. As to quaternary structure, the precursor of protein E3/E2 and E1 form a heterodimer shortly after synthesis. Processing of the precursor of protein E3/E2 into E2 and E3 results in a heterodimer of the spike glycoproteins E2 and E1. Spike at virion surface are constituted of a trimer of E2-E1 heterodimers. After target cell attachment and endocytosis, E1 change conformation to form homotrimers. Interacts with 6K protein. In terms of assembly, interacts with spike glycoprotein E1. Processing of the precursor of protein E3/E2 into E2 and E3 results in a heterodimer of the spike glycoproteins E2 and E1. Spike at virion surface are constituted of a trimer of E2-E1 heterodimers. Interacts with 6K protein. Oligomer. Interacts with spike glycoprotein E1. Interacts with spike glycoprotein E2. In terms of processing, structural polyprotein: Specific enzymatic cleavages in vivo yield mature proteins. Capsid protein is auto-cleaved during polyprotein translation, unmasking a signal peptide at the N-terminus of the precursor of E3/E2. The remaining polyprotein is then targeted to the host endoplasmic reticulum, where host signal peptidase cleaves it into pE2, 6K and E1 proteins. pE2 is further processed to mature E3 and E2 by host furin in trans-Golgi vesicle. Palmitoylated via thioester bonds. These palmitoylations may induce disruption of the C-terminus transmembrane. This would result in the reorientation of E2 C-terminus from lumenal to cytoplasmic side. Post-translationally, N-glycosylated. In terms of processing, palmitoylated via thioester bonds.

The protein resides in the virion. Its subcellular location is the host cytoplasm. It is found in the host cell membrane. The protein localises to the host nucleus. It localises to the virion membrane. The protein resides in the host Golgi apparatus. Its subcellular location is the host trans-Golgi network. It is found in the host endoplasmic reticulum. The catalysed reaction is Autocatalytic release of the core protein from the N-terminus of the togavirus structural polyprotein by hydrolysis of a -Trp-|-Ser- bond.. In terms of biological role, forms an icosahedral capsid with a T=4 symmetry composed of 240 copies of the capsid protein surrounded by a lipid membrane through which penetrate 80 spikes composed of trimers of E1-E2 heterodimers. The capsid protein binds to the viral RNA genome at a site adjacent to a ribosome binding site for viral genome translation following genome release. Possesses a protease activity that results in its autocatalytic cleavage from the nascent structural protein. Following its self-cleavage, the capsid protein transiently associates with ribosomes, and within several minutes the protein binds to viral RNA and rapidly assembles into icosahedric core particles. The resulting nucleocapsid eventually associates with the cytoplasmic domain of the spike glycoprotein E2 at the cell membrane, leading to budding and formation of mature virions. In case of infection, new virions attach to target cells and after clathrin-mediated endocytosis their membrane fuses with the host endosomal membrane. This leads to the release of the nucleocapsid into the cytoplasm, followed by an uncoating event necessary for the genomic RNA to become accessible. The uncoating might be triggered by the interaction of capsid proteins with ribosomes. Binding of ribosomes would release the genomic RNA since the same region is genomic RNA-binding and ribosome-binding. Specifically inhibits interleukin-1 receptor-associated kinase 1/IRAK1-dependent signaling during viral entry, representing a means by which the alphaviruses may evade innate immune detection and activation prior to viral gene expression. Provides the signal sequence for the translocation of the precursor of protein E3/E2 to the host endoplasmic reticulum. Furin-cleaved E3 remains associated with spike glycoprotein E1 and mediates pH protection of the latter during the transport via the secretory pathway. After virion release from the host cell, the assembly protein E3 is gradually released in the extracellular space. Functionally, plays a role in viral attachment to target host cell, by binding to the cell receptor. Synthesized as a p62 precursor which is processed by furin at the cell membrane just before virion budding, giving rise to E2-E1 heterodimer. The p62-E1 heterodimer is stable, whereas E2-E1 is unstable and dissociate at low pH. p62 is processed at the last step, presumably to avoid E1 fusion activation before its final export to cell surface. E2 C-terminus contains a transitory transmembrane that would be disrupted by palmitoylation, resulting in reorientation of the C-terminal tail from lumenal to cytoplasmic side. This step is critical since E2 C-terminus is involved in budding by interacting with capsid proteins. This release of E2 C-terminus in cytoplasm occurs lately in protein export, and precludes premature assembly of particles at the endoplasmic reticulum membrane. Its function is as follows. Acts as a viroporin that participates in virus glycoprotein processing and transport to the plasma membrane, cell permeabilization and budding of viral particles. Disrupts the calcium homeostasis of the cell, probably at the endoplasmic reticulum level. This leads to cytoplasmic calcium elevation. Because of its lipophilic properties, the 6K protein is postulated to influence the selection of lipids that interact with the transmembrane domains of the glycoproteins, which, in turn, affects the deformability of the bilayer required for the extreme curvature that occurs as budding proceeds. Present in low amount in virions, about 3% compared to viral glycoproteins. In terms of biological role, class II viral fusion protein. Fusion activity is inactive as long as E1 is bound to E2 in mature virion. After virus attachment to target cell and endocytosis, acidification of the endosome induce dissociation of E1/E2 heterodimer and concomitant trimerization of the E1 subunits. This E1 trimer is fusion active, and promotes release of viral nucleocapsid in cytoplasm after endosome and viral membrane fusion. Efficient fusion requires the presence of cholesterol and sphingolipid in the target membrane. The polypeptide is Structural polyprotein (Aedes (AURAV)).